We begin with the raw amino-acid sequence, 889 residues long: MLPAPAAPRWPPLLLLLLLLLPLARGAPARPAAGGQASELVVPTRLPGSAGELALHLSAFGKGFVLRLAPDDSFLAPEFKIERLGGSGRATGGERGLRGCFFSGTVNGEPESLAAVSLCRGLSGSFLLDGEEFTIQPQGAGGSLAQPHRLQRWGPAGARPLPRGPEWEVETGEGQRQERGDHQEDSEEESQEEEAEGASEPPPPLGATSRTKRFVSEARFVETLLVADASMAAFYGADLQNHILTLMSVAARIYKHPSIKNSINLMVVKVLIVEDEKWGPEVSDNGGLTLRNFCNWQRRFNQPSDRHPEHYDTAILLTRQNFCGQEGLCDTLGVADIGTICDPNKSCSVIEDEGLQAAHTLAHELGHVLSMPHDDSKPCTRLFGPMGKHHVMAPLFVHLNQTLPWSPCSAMYLTELLDGGHGDCLLDAPAAALPLPTGLPGRMALYQLDQQCRQIFGPDFRHCPNTSAQDVCAQLWCHTDGAEPLCHTKNGSLPWADGTPCGPGHLCSEGSCLPEEEVERPKPVADGGWAPWGPWGECSRTCGGGVQFSHRECKDPEPQNGGRYCLGRRAKYQSCHTEECPPDGKSFREQQCEKYNAYNYTDMDGNLLQWVPKYAGVSPRDRCKLFCRARGRSEFKVFEAKVIDGTLCGPETLAICVRGQCVKAGCDHVVDSPRKLDKCGVCGGKGNSCRKVSGSLTPTNYGYNDIVTIPAGATNIDVKQRSHPGVQNDGNYLALKTADGQYLLNGNLAISAIEQDILVKGTILKYSGSIATLERLQSFRPLPEPLTVQLLTVPGEVFPPKVKYTFFVPNDVDFSMQSSKERATTNIIQPLLHAQWVLGDWSECSSTCGAGWQRRTVECRDPSGQASATCNKALKPEDAKPCESQLCPL.

The signal sequence occupies residues 1 to 26 (MLPAPAAPRWPPLLLLLLLLLPLARG). Residues 27–213 (APARPAAGGQ…PLGATSRTKR (187 aa)) constitute a propeptide that is removed on maturation. Residues 138-210 (QGAGGSLAQP…PPPPLGATSR (73 aa)) are disordered. Residues 173 to 183 (EGQRQERGDHQ) are compositionally biased toward basic and acidic residues. Over residues 184–197 (EDSEEESQEEEAEG) the composition is skewed to acidic residues. One can recognise a Peptidase M12B domain in the interval 219-429 (RFVETLLVAD…GHGDCLLDAP (211 aa)). Cystine bridges form between cysteine 294-cysteine 347, cysteine 323-cysteine 329, cysteine 341-cysteine 424, cysteine 379-cysteine 408, cysteine 452-cysteine 477, cysteine 463-cysteine 486, cysteine 472-cysteine 507, cysteine 501-cysteine 512, cysteine 538-cysteine 575, cysteine 542-cysteine 580, and cysteine 553-cysteine 565. The N-linked (GlcNAc...) asparagine glycan is linked to asparagine 344. Residue histidine 363 coordinates Zn(2+). Glutamate 364 is a catalytic residue. 2 residues coordinate Zn(2+): histidine 367 and histidine 373. Residues asparagine 400, asparagine 465, and asparagine 490 are each glycosylated (N-linked (GlcNAc...) asparagine). The Disintegrin domain occupies 438-525 (GLPGRMALYQ…EEVERPKPVA (88 aa)). Residues 526–581 (DGGWAPWGPWGECSRTCGGGVQFSHRECKDPEPQNGGRYCLGRRAKYQSCHTEECP) enclose the TSP type-1 1 domain. Asparagine 599 carries an N-linked (GlcNAc...) asparagine glycan. A spacer region spans residues 690–831 (RKVSGSLTPT…RATTNIIQPL (142 aa)). The TSP type-1 2 domain occupies 833–888 (HAQWVLGDWSECSSTCGAGWQRRTVECRDPSGQASATCNKALKPEDAKPCESQLCP).

Zn(2+) is required as a cofactor. Post-translationally, the precursor is cleaved by a furin endopeptidase. Glycosylated. Can be O-fucosylated by POFUT2 on a serine or a threonine residue found within the consensus sequence C1-X(2)-(S/T)-C2-G of the TSP type-1 repeat domains where C1 and C2 are the first and second cysteine residue of the repeat, respectively. Fucosylated repeats can then be further glycosylated by the addition of a beta-1,3-glucose residue by the glucosyltransferase, B3GALTL. Fucosylation mediates the efficient secretion of ADAMTS family members. Can also be C-glycosylated with one or two mannose molecules on tryptophan residues within the consensus sequence W-X-X-W of the TPRs, and N-glycosylated. These other glycosylations can also facilitate secretion. Highly expressed in adult and fetal lung, lower expression in brain, placenta, heart, stomach and fetal brain and kidney.

It is found in the secreted. It localises to the extracellular space. Its subcellular location is the extracellular matrix. Functionally, has anti-angiogenic properties. The protein is A disintegrin and metalloproteinase with thrombospondin motifs 8 (ADAMTS8) of Homo sapiens (Human).